The following is a 362-amino-acid chain: Phospho-N-acetylmuramoyl-pentapeptide-transferase (362 aa).

10 consecutive transmembrane segments (helical) span residues 28-48 (AACM…IRWL), 72-92 (GTPT…TLLW), 100-120 (VWAV…DDYL), 134-154 (VKLI…MSLT), 170-190 (VLIP…MGAS), 201-221 (GLAI…AYLV), 241-261 (LTVF…FNAP), 265-285 (VFMG…VAIA), 290-310 (IVLA…IVQV), and 339-359 (TIVI…LATL).

This sequence belongs to the glycosyltransferase 4 family. MraY subfamily. The cofactor is Mg(2+).

It is found in the cell inner membrane. It carries out the reaction UDP-N-acetyl-alpha-D-muramoyl-L-alanyl-gamma-D-glutamyl-meso-2,6-diaminopimeloyl-D-alanyl-D-alanine + di-trans,octa-cis-undecaprenyl phosphate = di-trans,octa-cis-undecaprenyl diphospho-N-acetyl-alpha-D-muramoyl-L-alanyl-D-glutamyl-meso-2,6-diaminopimeloyl-D-alanyl-D-alanine + UMP. The protein operates within cell wall biogenesis; peptidoglycan biosynthesis. In terms of biological role, catalyzes the initial step of the lipid cycle reactions in the biosynthesis of the cell wall peptidoglycan: transfers peptidoglycan precursor phospho-MurNAc-pentapeptide from UDP-MurNAc-pentapeptide onto the lipid carrier undecaprenyl phosphate, yielding undecaprenyl-pyrophosphoryl-MurNAc-pentapeptide, known as lipid I. This is Phospho-N-acetylmuramoyl-pentapeptide-transferase from Granulibacter bethesdensis (strain ATCC BAA-1260 / CGDNIH1).